Here is a 276-residue protein sequence, read N- to C-terminus: Type II pantothenate kinase (276 aa).

8–15 (DAGGTLTK) is a binding site for ATP. Residue glutamate 76 is the Proton acceptor of the active site. ATP-binding positions include threonine 105, 127-131 (GGTIM), phenylalanine 143, and serine 230.

The protein belongs to the type II pantothenate kinase family. As to quaternary structure, homodimer.

It is found in the cytoplasm. The catalysed reaction is (R)-pantothenate + ATP = (R)-4'-phosphopantothenate + ADP + H(+). The protein operates within cofactor biosynthesis; coenzyme A biosynthesis; CoA from (R)-pantothenate: step 1/5. Functionally, catalyzes the phosphorylation of pantothenate (Pan), the first step in CoA biosynthesis. The chain is Type II pantothenate kinase from Bacillus thuringiensis subsp. konkukian (strain 97-27).